Reading from the N-terminus, the 289-residue chain is Early E4 34 kDa protein (289 aa).

This sequence belongs to the adenoviridae E4 30 to 34 kDa protein family. As to quaternary structure, interacts with E1B-55k.

It localises to the host nucleus. The protein localises to the host cytoplasm. Plays a major role to prevent cellular inhibition of viral genome replication by nuclear bodies. Assembles an SCF-like E3 ubiquitin ligase complex based on the cellular proteins ELOB, ELOC, CUL5 and RBX1, in cooperation with viral E1B-55K. This viral RING-type ligase ubiquitinates cellular substrates prior to proteasomal degradation: p53/TP53, LIG4, MRE11-RAD50-NBS1 (MRN) complex, ITGA3, DAXX and BLM. The protein is Early E4 34 kDa protein of Human adenovirus F serotype 40 (HAdV-40).